Here is a 293-residue protein sequence, read N- to C-terminus: ATP synthase gamma chain (293 aa).

The protein belongs to the ATPase gamma chain family. In terms of assembly, F-type ATPases have 2 components, CF(1) - the catalytic core - and CF(0) - the membrane proton channel. CF(1) has five subunits: alpha(3), beta(3), gamma(1), delta(1), epsilon(1). CF(0) has three main subunits: a, b and c.

It localises to the cell membrane. Produces ATP from ADP in the presence of a proton gradient across the membrane. The gamma chain is believed to be important in regulating ATPase activity and the flow of protons through the CF(0) complex. This is ATP synthase gamma chain from Streptococcus agalactiae serotype Ia (strain ATCC 27591 / A909 / CDC SS700).